The sequence spans 67 residues: uncharacterized protein (67 aa).

This is an uncharacterized protein from Enterobacteria phage T4 (Bacteriophage T4).